Consider the following 426-residue polypeptide: Glucose-6-phosphate isomerase (426 aa).

Catalysis depends on glutamate 282, which acts as the Proton donor. Residues histidine 303 and lysine 419 contribute to the active site.

The protein belongs to the GPI family.

The protein localises to the cytoplasm. It carries out the reaction alpha-D-glucose 6-phosphate = beta-D-fructose 6-phosphate. Its pathway is carbohydrate biosynthesis; gluconeogenesis. The protein operates within carbohydrate degradation; glycolysis; D-glyceraldehyde 3-phosphate and glycerone phosphate from D-glucose: step 2/4. In terms of biological role, catalyzes the reversible isomerization of glucose-6-phosphate to fructose-6-phosphate. The chain is Glucose-6-phosphate isomerase from Mycoplasmoides gallisepticum (strain R(low / passage 15 / clone 2)) (Mycoplasma gallisepticum).